Consider the following 149-residue polypeptide: Lipoprotein signal peptidase (149 aa).

The next 3 helical transmembrane spans lie at 24 to 44 (SHIA…LTNL), 57 to 77 (KMWF…YLLW), and 81 to 101 (GKWL…GNFI). Catalysis depends on residues D111 and D127. The helical transmembrane segment at 122 to 142 (IFNFADSCLTVGVIFILIGVL) threads the bilayer.

This sequence belongs to the peptidase A8 family.

The protein localises to the cell membrane. It carries out the reaction Release of signal peptides from bacterial membrane prolipoproteins. Hydrolyzes -Xaa-Yaa-Zaa-|-(S,diacylglyceryl)Cys-, in which Xaa is hydrophobic (preferably Leu), and Yaa (Ala or Ser) and Zaa (Gly or Ala) have small, neutral side chains.. Its pathway is protein modification; lipoprotein biosynthesis (signal peptide cleavage). In terms of biological role, this protein specifically catalyzes the removal of signal peptides from prolipoproteins. The protein is Lipoprotein signal peptidase of Lactiplantibacillus plantarum (strain ATCC BAA-793 / NCIMB 8826 / WCFS1) (Lactobacillus plantarum).